A 436-amino-acid polypeptide reads, in one-letter code: Tol-Pal system protein TolB (436 aa).

The signal sequence occupies residues 1 to 28; the sequence is MEMLRRNFFRLLMVLVAGCGLIASPAKA.

Belongs to the TolB family. The Tol-Pal system is composed of five core proteins: the inner membrane proteins TolA, TolQ and TolR, the periplasmic protein TolB and the outer membrane protein Pal. They form a network linking the inner and outer membranes and the peptidoglycan layer.

The protein localises to the periplasm. Its function is as follows. Part of the Tol-Pal system, which plays a role in outer membrane invagination during cell division and is important for maintaining outer membrane integrity. This is Tol-Pal system protein TolB from Sinorhizobium medicae (strain WSM419) (Ensifer medicae).